The primary structure comprises 67 residues: Beta-defensin 123 (67 aa).

The signal sequence occupies residues 1–20; it reads MKLLLLTLTVLLLLSQLTPG. Intrachain disulfides connect Cys-25–Cys-52, Cys-32–Cys-46, and Cys-36–Cys-53.

This sequence belongs to the beta-defensin family.

Its subcellular location is the secreted. Has antibacterial activity. This Gorilla gorilla gorilla (Western lowland gorilla) protein is Beta-defensin 123 (DEFB123).